The primary structure comprises 271 residues: Phosphonates import ATP-binding protein PhnC 2 (271 aa).

The ABC transporter domain maps to 2-245 (LTIDKLTKRF…VARDIYGAGA (244 aa)). ATP is bound at residue 34–41 (GRSGAGKS).

It belongs to the ABC transporter superfamily. Phosphonates importer (TC 3.A.1.9.1) family. In terms of assembly, the complex is composed of two ATP-binding proteins (PhnC), two transmembrane proteins (PhnE) and a solute-binding protein (PhnD).

Its subcellular location is the cell inner membrane. The enzyme catalyses phosphonate(out) + ATP + H2O = phosphonate(in) + ADP + phosphate + H(+). Functionally, part of the ABC transporter complex PhnCDE involved in phosphonates import. Responsible for energy coupling to the transport system. The protein is Phosphonates import ATP-binding protein PhnC 2 of Roseobacter denitrificans (strain ATCC 33942 / OCh 114) (Erythrobacter sp. (strain OCh 114)).